A 378-amino-acid chain; its full sequence is B3 domain-containing protein Os03g0622200 (378 aa).

The TF-B3 1 DNA-binding region spans 29 to 124 (SKHFLKHMVG…SFDVLIFDPS (96 aa)). The tract at residues 140–159 (GRAENSAGAEQGGRNGRRTP) is disordered. The TF-B3 2 DNA-binding region spans 256 to 370 (FVQVIHSSHV…TMTVHVLRRV (115 aa)).

The protein resides in the nucleus. The chain is B3 domain-containing protein Os03g0622200 from Oryza sativa subsp. japonica (Rice).